The chain runs to 92 residues: Small ribosomal subunit protein uS19 (92 aa).

It belongs to the universal ribosomal protein uS19 family.

Protein S19 forms a complex with S13 that binds strongly to the 16S ribosomal RNA. This Vibrio vulnificus (strain CMCP6) protein is Small ribosomal subunit protein uS19.